Reading from the N-terminus, the 2299-residue chain is Acetyl-CoA carboxylase dmxL1 (2299 aa).

Residues 21–39 (TSIPASVPASAPPSSSAPH) are compositionally biased toward low complexity. The interval 21 to 41 (TSIPASVPASAPPSSSAPHAA) is disordered. One can recognise a Biotin carboxylation domain in the interval 75–583 (VITNVLIANN…TTGWLDELIT (509 aa)). Positions 227-424 (QVAIDADGIV…LPAAQLQIAM (198 aa)) constitute an ATP-grasp 1 domain. An ATP-binding site is contributed by 258–315 (AKEIGFPVMIKASEGGGGKGIRKCEQEEGFEALYNAASSEIPGSPIFIMKLAGNARHL). Residues glutamate 381, glutamate 395, and asparagine 397 each coordinate Mg(2+). Mn(2+) contacts are provided by glutamate 381, glutamate 395, and asparagine 397. A Biotinyl-binding domain is found at 710 to 784 (LEQENDPTQL…EPGDVLGILT (75 aa)). Lysine 751 carries the post-translational modification N6-biotinyllysine. A disordered region spans residues 1159-1208 (DMEMSSQLSTPSTPATPPTPPYENGKQSKGVGSISDMSNLIENPDKEPTR). Positions 1539–1887 (PTKALEWLQP…KKNTLVPIGP (349 aa)) constitute a CoA carboxyltransferase N-terminal domain. A CoA carboxyltransferase C-terminal domain is found at 1891–2205 (PWDRDIVCSP…EEHILKRIAT (315 aa)).

Requires biotin as cofactor. Mg(2+) is required as a cofactor. It depends on Mn(2+) as a cofactor.

It carries out the reaction hydrogencarbonate + acetyl-CoA + ATP = malonyl-CoA + ADP + phosphate + H(+). The enzyme catalyses N(6)-biotinyl-L-lysyl-[protein] + hydrogencarbonate + ATP = N(6)-carboxybiotinyl-L-lysyl-[protein] + ADP + phosphate + H(+). It functions in the pathway secondary metabolite biosynthesis. Its pathway is lipid metabolism; malonyl-CoA biosynthesis; malonyl-CoA from acetyl-CoA: step 1/1. Acetyl-CoA carboxylase; part of the gene cluster that mediates the biosynthesis of the dimeric xanthones cryptosporioptides. The pathway begins with the synthesis of atrochrysone thioester by the polyketide synthase dmx-nrPKS. The atrochrysone carboxyl ACP thioesterase dmxR1 then breaks the thioester bond and releases the atrochrysone carboxylic acid from dmx-nrPKS. Atrochrysone carboxylic acid is decarboxylated by the decarboxylase dmxR15, and oxidized by the anthrone oxygenase dmxR16 to yield emodin. Emodin is then reduced to emodin hydroquinone by the oxidoreductase dmxR7. A-ring reduction by the short chain dehydrogenase dmxR18, dehydration by the scytalone dehydratase-like protein dmxR17 and probable spontaneous re-oxidation, results in overall deoxygenation to chrysophanol. Baeyer-Villiger oxidation by the Baeyer-Villiger monooxygenase (BVMO) dmxR6 then yields monodictylactone in equilibrium with monodictyphenone. In the case of the cryptosporioptides biosynthesis, monodictylactone is reduced at C-12 to an alcohol (by the short chain dehydrogenases dmxR12 or dmxR8) and hydroxylated at C-5 by dmxR9, yielding the electron-rich aromatic which could eliminate H(2)O to form the ortho-quinonemethide, followed by tautomerisation to paraquinone and complete the formal reduction to produce the 10-methylgroup. Conjugate addition of C-4a-OH to the resulting paraquinone by the monooxygenase dmxR10 then gives cyclohexadienone, which is then reduced at C-5 by the short chain dehydrogenase dmxR3 to give the dihydroxanthone. The 6,7-epoxide in the cryptosporioptides could be introduced by the cytochrome P450 monooxygenase dmxL3. The highly reducing PKS dmxL2 manufactures butyrate, which is further carboxylated by dmxL1 to form ethylmalonate. It is not yet clear whether the carboxylation occurs while the butyrate is attached to the ACP of dmxL2, but this unusual fungal metabolite could then be esterified to O-5 by the O-acetyltransferase dmxR13. Finally, dimerization performed by dmxR5 gives the observed dimers cryptosporioptides A, B and C as the final products of the pathway. The chain is Acetyl-CoA carboxylase dmxL1 from Cryptosporiopsis sp. (strain 8999).